A 273-amino-acid polypeptide reads, in one-letter code: 2-dehydro-3-deoxyphosphooctonate aldolase (273 aa).

The protein belongs to the KdsA family.

Its subcellular location is the cytoplasm. It catalyses the reaction D-arabinose 5-phosphate + phosphoenolpyruvate + H2O = 3-deoxy-alpha-D-manno-2-octulosonate-8-phosphate + phosphate. It functions in the pathway carbohydrate biosynthesis; 3-deoxy-D-manno-octulosonate biosynthesis; 3-deoxy-D-manno-octulosonate from D-ribulose 5-phosphate: step 2/3. The protein operates within bacterial outer membrane biogenesis; lipopolysaccharide biosynthesis. The chain is 2-dehydro-3-deoxyphosphooctonate aldolase from Desulfatibacillum aliphaticivorans.